A 286-amino-acid polypeptide reads, in one-letter code: Structure-specific endonuclease subunit SLX1 (286 aa).

Positions 15 to 98 (SFYGVYILKS…QHAYQTRHIN (84 aa)) constitute a GIY-YIG domain.

Belongs to the SLX1 family. In terms of assembly, forms a heterodimer with SLX4. The cofactor is a divalent metal cation.

Its subcellular location is the nucleus. Its function is as follows. Catalytic subunit of the SLX1-SLX4 structure-specific endonuclease that resolves DNA secondary structures generated during DNA repair and recombination. Has endonuclease activity towards branched DNA substrates, introducing single-strand cuts in duplex DNA close to junctions with ss-DNA. This chain is Structure-specific endonuclease subunit SLX1, found in Candida dubliniensis (strain CD36 / ATCC MYA-646 / CBS 7987 / NCPF 3949 / NRRL Y-17841) (Yeast).